Reading from the N-terminus, the 184-residue chain is Shikimate kinase (184 aa).

12-17 lines the ATP pocket; the sequence is GSGKST. Ser16 provides a ligand contact to Mg(2+). Substrate is bound by residues Asp34, Arg58, and Gly80. Arg117 is an ATP binding site. Arg136 serves as a coordination point for substrate. Arg153 serves as a coordination point for ATP. The disordered stretch occupies residues 164–184; that stretch reads SRLDDPTPNTSPSSTASGAAT. Residues 169–184 are compositionally biased toward low complexity; sequence PTPNTSPSSTASGAAT.

The protein belongs to the shikimate kinase family. Monomer. The cofactor is Mg(2+).

The protein resides in the cytoplasm. The catalysed reaction is shikimate + ATP = 3-phosphoshikimate + ADP + H(+). The protein operates within metabolic intermediate biosynthesis; chorismate biosynthesis; chorismate from D-erythrose 4-phosphate and phosphoenolpyruvate: step 5/7. Its function is as follows. Catalyzes the specific phosphorylation of the 3-hydroxyl group of shikimic acid using ATP as a cosubstrate. The chain is Shikimate kinase from Mycobacterium ulcerans (strain Agy99).